Consider the following 925-residue polypeptide: Protein PDC2 (925 aa).

The region spanning 63 to 138 is the HTH CENPB-type domain; sequence DANRLRKPNN…LSKMDVNISV (76 aa). Disordered stretches follow at residues 510–596, 674–693, and 904–925; these read DNNQ…RNSS, NEKAASDQNKSTDELPSSTA, and PTGGSNLPDSNNLHLPGNTGFF. A compositionally biased stretch (polar residues) spans 513-537; sequence QNHLSMSQASHNPDYNSNHSNNAIE. Positions 538–563 are enriched in low complexity; the sequence is NTNNRGSNNNNNNNGSSNNINDNDSS. Residues 565–596 show a composition bias toward polar residues; that stretch reads KYLQQNTVDNSTKTGNPGQPNISSMESQRNSS. The segment covering 674-686 has biased composition (basic and acidic residues); that stretch reads NEKAASDQNKSTD. A compositionally biased stretch (polar residues) spans 904-916; it reads PTGGSNLPDSNNL.

Its function is as follows. Essential for the synthesis of pyruvate decarboxylase. May be important for a high basal level of PDC gene expression or play a positive role in the autoregulation control of PDC1 and PDC5. The chain is Protein PDC2 (PDC2) from Saccharomyces cerevisiae (strain ATCC 204508 / S288c) (Baker's yeast).